The following is a 229-amino-acid chain: Sperm flagellar protein 1 (229 aa).

The Calponin-homology (CH) domain maps to glutamate 7–glutamine 115. Positions alanine 122–glutamine 169 are disordered. Residues aspartate 123–threonine 136 show a composition bias toward polar residues. Residues arginine 178–lysine 229 form an essential for homodimerization and microtubule bundling activity region.

Homodimer.

The protein localises to the cytoplasm. Its subcellular location is the cytoskeleton. It localises to the cilium axoneme. It is found in the apical cell membrane. Its function is as follows. Microtubule-associated protein involved in the stabilization of microtubules along the axis of migration during radial intercalation. Promotes the establishment and stabilization of an axis of microtubules required for the active migration of cells into the outer epithelium. Microtubule-associated protein that promotes microtubule bundling and stabilizes microtubules against depolymerization in response to cold shock. Essential for ciliary central apparatus formation which requires both its microtubule-binding and bundling activities. Regulates planar cell polarity signaling pathway and asymmetric microtubule accumulation in ciliated epithelia. The sequence is that of Sperm flagellar protein 1 from Xenopus laevis (African clawed frog).